A 411-amino-acid polypeptide reads, in one-letter code: MRAERTSFLLALGLLVAGIRSVHCLPENVVVKDQHRRVDGHTLASSNTDFAFSLYKQLALKNPNKNVILSPLSVSIALAFLSLGARGSTLTEILEGLKFNLTEIQEKEIHHSFQHLLQALNQPSNQLQLSVGNAMFVQEELKLLDKFIEDAQVLYSSEAFPTNFRDSEAARSLINDYVKNKTQGKIEELFKYLSPRTELVLVNYIYFKAQWKTPFDPKHTEQAEFHVSDNKTVEVPMMTLDLETPYFRDEELGCTLVELTYTSNDSALFILPDEGKMRDLEAKLTPETLTRWRNSLQPRRIHELYLPKFSIKSNYELNDILSQLGIRKIFANADLSGITGTADLVVSQVVHGAALDVDEEGTEGVAATGIGIERTFLRIIVRVNRPFLIAVVLKDTQSIIFLGKVTNPSEA.

The N-terminal stretch at 1–24 is a signal peptide; the sequence is MRAERTSFLLALGLLVAGIRSVHC. 4 N-linked (GlcNAc...) asparagine glycosylation sites follow: asparagine 100, asparagine 180, asparagine 230, and asparagine 264.

The protein belongs to the serpin family. Homodimer.

Its subcellular location is the cytoplasmic vesicle. The protein resides in the secretory vesicle. It is found in the chromaffin granule. The protein localises to the secreted. Its function is as follows. Serine protease inhibitor. In Bos taurus (Bovine), this protein is Serpin A3-2.